A 2671-amino-acid chain; its full sequence is Inositol 1,4,5-trisphosphate-gated calcium channel ITPR3 (2671 aa).

The Cytoplasmic portion of the chain corresponds to 1-2202 (MSEMSSFLHI…LIYWFSRRMT (2202 aa)). 5 MIR domains span residues 113–173 (GDVV…LRSN), 174–224 (GDNV…INLF), 232–288 (EEVL…VEVV), 295–372 (GGAG…LDPT), and 378–434 (DSFV…IVSV). 1D-myo-inositol 1,4,5-trisphosphate-binding residues include Arg266, Thr268, Leu269, and Arg270. The tract at residues 322–342 (SYKGDASDPKAAGMGAQGRTG) is disordered. The 1D-myo-inositol 1,4,5-trisphosphate site is built by Arg503, Lys507, Arg510, Tyr567, Arg568, and Lys569. A Ca(2+)-binding site is contributed by Arg743. Phosphoserine occurs at positions 916 and 934. Glu1122 and Glu1125 together coordinate Ca(2+). 2 disordered regions span residues 1132-1163 (GSGK…PPGE) and 1809-1848 (NDLG…GPSL). Ser1813, Ser1832, and Ser1834 each carry phosphoserine. Residues Glu1882 and Glu1946 each coordinate Ca(2+). ATP is bound by residues Ala1996, Glu2149, and Lys2152. Residues 2203–2223 (LWGSISFNLAVFINIIIAFFY) form a helical membrane-spanning segment. Topologically, residues 2224-2235 (PYMEGASTGVLD) are extracellular. The helical transmembrane segment at 2236-2256 (SPLISLLFWILICFSIAALFT) threads the bilayer. Residues 2257-2264 (KRYSIRPL) lie on the Cytoplasmic side of the membrane. A helical membrane pass occupies residues 2265-2285 (IVALILRSIYYLGIGPTLNIL). Residues 2286-2325 (GALNLTNKIVFVVSFVGNRGTFIRGYKAMVMDMEFLYHVG) lie on the Extracellular side of the membrane. The chain crosses the membrane as a helical span at residues 2326–2346 (YILTSVLGLFAHELFYSILLF). Residues 2347 to 2368 (DLIYREETLFNVIKSVTRNGRS) lie on the Cytoplasmic side of the membrane. Residues 2369–2389 (ILLTALLALILVYLFSIVGFL) traverse the membrane as a helical segment. At 2390–2496 (FLKDDFILEV…ESLFPARVVY (107 aa)) the chain is on the extracellular side. Cys2455 and Cys2461 form a disulfide bridge. Residues 2497-2517 (DLLFFFIVIIIVLNLIFGVII) form a helical membrane-spanning segment. The Cytoplasmic segment spans residues 2518-2671 (DTFADLRSEK…FVDVQNCISR (154 aa)). ATP-binding residues include Cys2538 and Phe2539. Cys2538 is a Zn(2+) binding site. Positions 2541 and 2558 each coordinate Zn(2+). ATP contacts are provided by Lys2560, His2563, Asn2564, and Met2565. His2563 lines the Zn(2+) pocket. Position 2581 (Thr2581) interacts with Ca(2+). A phosphoserine mark is found at Ser2609 and Ser2670.

It belongs to the InsP3 receptor family. As to quaternary structure, homotetramer. Homodimer. Interacts with TRPC1, TRPC3 and TRPC4. Interacts with TRPV4. Interacts with SIGMAR1. Interacts with PML and AKT1. Interacts with IRAG2 (via coiled-coil domain). Interacts with CABP1. Interacts with TMBIM4/LFG4. Interacts with CEMIP. Interacts with TESPA1. Interacts with TMEM203. Interacts with BOK; regulates ITPR3 expression. Interacts with BCL2L10. Interacts with CHGA and CHGB. Post-translationally, phosphorylated by AKT1 on serine and/or threonine residues. As to expression, expressed in intestinal crypt and villus epithelial cells.

It is found in the endoplasmic reticulum membrane. Its subcellular location is the cytoplasmic vesicle. It localises to the secretory vesicle membrane. The catalysed reaction is Ca(2+)(in) = Ca(2+)(out). With respect to regulation, inositol 1,4,5-trisphosphate-gated calcium channel is regulated by cytosolic calcium in a biphasic manner. At low concentrations, cytosolic calcium binds at a high-affinity juxtamembrane domain (JD) calcium binding site, allowing ITPR3 to activate by escaping a low-energy resting state through an ensemble of preactivated states. At high cytosolic calcium concentrations, ITPR3 preferentially enters an inhibited state stabilized by calcium binding at a second, low-affinity cytoplasmic domain (CD) calcium binding site. Functionally, inositol 1,4,5-trisphosphate-gated calcium channel that, upon 1D-myo-inositol 1,4,5-trisphosphate binding, transports calcium from the endoplasmic reticulum lumen to cytoplasm, thus releasing the intracellular calcium and therefore participates in cellular calcium ion homeostasis. 1D-myo-inositol 1,4,5-trisphosphate binds to the ligand-free channel without altering its global conformation, yielding the low-energy resting state, then progresses through resting-to preactivated transitions to the higher energy preactivated state, which increases affinity for calcium, promoting binding of the low basal cytosolic calcium at the juxtamembrane domain (JD) site, favoring the transition through the ensemble of high-energy intermediate states along the trajectory to the fully-open activated state. Upon opening, releases calcium in the cytosol where it can bind to the low-affinity cytoplasmic domain (CD) site and stabilizes the inhibited state to terminate calcium release. This Homo sapiens (Human) protein is Inositol 1,4,5-trisphosphate-gated calcium channel ITPR3.